Here is a 320-residue protein sequence, read N- to C-terminus: o-succinylbenzoate synthase (320 aa).

Residue Lys-133 is the Proton donor of the active site. The Mg(2+) site is built by Asp-161, Glu-190, and Asp-213. Residue Lys-235 is the Proton acceptor of the active site.

Belongs to the mandelate racemase/muconate lactonizing enzyme family. MenC type 1 subfamily. A divalent metal cation serves as cofactor.

The enzyme catalyses (1R,6R)-6-hydroxy-2-succinyl-cyclohexa-2,4-diene-1-carboxylate = 2-succinylbenzoate + H2O. Its pathway is quinol/quinone metabolism; 1,4-dihydroxy-2-naphthoate biosynthesis; 1,4-dihydroxy-2-naphthoate from chorismate: step 4/7. The protein operates within quinol/quinone metabolism; menaquinone biosynthesis. In terms of biological role, converts 2-succinyl-6-hydroxy-2,4-cyclohexadiene-1-carboxylate (SHCHC) to 2-succinylbenzoate (OSB). This Escherichia coli (strain SMS-3-5 / SECEC) protein is o-succinylbenzoate synthase.